Reading from the N-terminus, the 160-residue chain is Cytochrome c-type biogenesis protein CcmE (160 aa).

Over 1–8 the chain is Cytoplasmic; sequence MNPRRKKR. The chain crosses the membrane as a helical; Signal-anchor for type II membrane protein span at residues 9–29; sequence LGIILAIFFGISATVGLMVYA. The Periplasmic segment spans residues 30–160; the sequence is LNQNMDLFYT…TTEQKEGNAQ (131 aa). Positions 128 and 132 each coordinate heme.

This sequence belongs to the CcmE/CycJ family.

Its subcellular location is the cell inner membrane. In terms of biological role, heme chaperone required for the biogenesis of c-type cytochromes. Transiently binds heme delivered by CcmC and transfers the heme to apo-cytochromes in a process facilitated by CcmF and CcmH. This chain is Cytochrome c-type biogenesis protein CcmE, found in Vibrio atlanticus (strain LGP32) (Vibrio splendidus (strain Mel32)).